A 215-amino-acid chain; its full sequence is Fanconi anemia core complex-associated protein 24 (215 aa).

As to quaternary structure, belongs to the multisubunit FA complex composed of FANCA, FANCB, FANCC, FANCE, FANCF, FANCG, FANCL/PHF9, FANCM and FAAP24. Interacts with FANCM.

It localises to the nucleus. Functionally, plays a role in DNA repair through recruitment of the FA core complex to damaged DNA. Regulates FANCD2 monoubiquitination upon DNA damage. Induces chromosomal instability as well as hypersensitivity to DNA cross-linking agents, when repressed. Targets FANCM/FAAP24 complex to the DNA, preferentially to single strand DNA. The protein is Fanconi anemia core complex-associated protein 24 of Bos taurus (Bovine).